We begin with the raw amino-acid sequence, 100 residues long: Urease subunit gamma (100 aa).

This sequence belongs to the urease gamma subunit family. In terms of assembly, heterotrimer of UreA (gamma), UreB (beta) and UreC (alpha) subunits. Three heterotrimers associate to form the active enzyme.

It is found in the cytoplasm. It carries out the reaction urea + 2 H2O + H(+) = hydrogencarbonate + 2 NH4(+). Its pathway is nitrogen metabolism; urea degradation; CO(2) and NH(3) from urea (urease route): step 1/1. The sequence is that of Urease subunit gamma from Marinomonas sp. (strain MWYL1).